Here is a 378-residue protein sequence, read N- to C-terminus: Phosphoserine aminotransferase (378 aa).

Arginine 53 is a binding site for L-glutamate. The pyridoxal 5'-phosphate site is built by tryptophan 117, threonine 167, aspartate 190, and glutamine 213. At lysine 214 the chain carries N6-(pyridoxal phosphate)lysine. 255 to 256 provides a ligand contact to pyridoxal 5'-phosphate; that stretch reads NT.

This sequence belongs to the class-V pyridoxal-phosphate-dependent aminotransferase family. SerC subfamily. In terms of assembly, homodimer. Requires pyridoxal 5'-phosphate as cofactor.

The protein localises to the cytoplasm. The enzyme catalyses O-phospho-L-serine + 2-oxoglutarate = 3-phosphooxypyruvate + L-glutamate. It carries out the reaction 4-(phosphooxy)-L-threonine + 2-oxoglutarate = (R)-3-hydroxy-2-oxo-4-phosphooxybutanoate + L-glutamate. The protein operates within amino-acid biosynthesis; L-serine biosynthesis; L-serine from 3-phospho-D-glycerate: step 2/3. Its pathway is cofactor biosynthesis; pyridoxine 5'-phosphate biosynthesis; pyridoxine 5'-phosphate from D-erythrose 4-phosphate: step 3/5. Catalyzes the reversible conversion of 3-phosphohydroxypyruvate to phosphoserine and of 3-hydroxy-2-oxo-4-phosphonooxybutanoate to phosphohydroxythreonine. This chain is Phosphoserine aminotransferase, found in Ralstonia pickettii (strain 12J).